Consider the following 1171-residue polypeptide: ATP-dependent helicase/deoxyribonuclease subunit B (1171 aa).

The 390-residue stretch at 1 to 390 folds into the UvrD-like helicase ATP-binding domain; sequence MSLRFVIGRA…HPLVECIRSA (390 aa). Residue 8 to 15 participates in ATP binding; that stretch reads GRAGSGKS. The region spanning 281–587 is the UvrD-like helicase C-terminal domain; it reads MEQPRFHSPA…QFANIPPSLD (307 aa). Cys-805, Cys-1129, Cys-1132, and Cys-1138 together coordinate [4Fe-4S] cluster.

It belongs to the helicase family. AddB/RexB type 1 subfamily. In terms of assembly, heterodimer of AddA and AddB. Requires Mg(2+) as cofactor. It depends on [4Fe-4S] cluster as a cofactor.

The heterodimer acts as both an ATP-dependent DNA helicase and an ATP-dependent, dual-direction single-stranded exonuclease. Recognizes the chi site generating a DNA molecule suitable for the initiation of homologous recombination. The AddB subunit has 5' -&gt; 3' nuclease activity but not helicase activity. The chain is ATP-dependent helicase/deoxyribonuclease subunit B from Bacillus cereus (strain ATCC 14579 / DSM 31 / CCUG 7414 / JCM 2152 / NBRC 15305 / NCIMB 9373 / NCTC 2599 / NRRL B-3711).